The following is a 469-amino-acid chain: Uronate isomerase (469 aa).

It belongs to the metallo-dependent hydrolases superfamily. Uronate isomerase family.

It catalyses the reaction D-glucuronate = D-fructuronate. The catalysed reaction is aldehydo-D-galacturonate = keto-D-tagaturonate. It participates in carbohydrate metabolism; pentose and glucuronate interconversion. The polypeptide is Uronate isomerase (Pectobacterium carotovorum subsp. carotovorum (strain PC1)).